We begin with the raw amino-acid sequence, 180 residues long: Early nodulin-16 (180 aa).

Positions 1 to 22 (MASSSPILLMIIFSMWLLISHS) are cleaved as a signal peptide. Positions 25 to 129 (TDYLIGDSHN…GLKLAVVVQN (105 aa)) constitute a Phytocyanin domain. Asparagine 67 is a glycosylation site (N-linked (GlcNAc...) asparagine). Cysteine 83 and cysteine 117 are disulfide-bonded. An N-linked (GlcNAc...) asparagine glycan is attached at asparagine 152. Serine 154 is lipidated: GPI-anchor amidated serine. The propeptide at 155–180 (GNKGGAAGLGFIMWLGVSLVMMMFLI) is removed in mature form.

Belongs to the early nodulin-like (ENODL) family. Expressed in developing nodules upon symbiosis with Sinorhizobium meliloti.

It is found in the symbiosome. Its subcellular location is the cell membrane. May act as a carbohydrate transporter. The chain is Early nodulin-16 from Medicago truncatula (Barrel medic).